A 292-amino-acid chain; its full sequence is 4-hydroxybenzoate solanesyltransferase (292 aa).

Helical transmembrane passes span 28–48 (LILMIPALWAVCLAAQGLPPL), 49–69 (PLLGTIALGTLATSGLGCVVN), 97–117 (VGIGVALVALLCAAGLAFYLT), 118–138 (PLSFWLCVAAVPVIVAYPGAK), 140–160 (VFPVPQLVLSIAWGFAVLISW), 172–192 (WVLWGATVFWTLGFDTVYAMA), 217–237 (VGIFFALTIGCLFYLGMILML), 239–259 (PLYWLSLAIAIVGWVIQYIQL), and 272–292 (IFGQNVIIGFVLLAGMLLGWL).

This sequence belongs to the UbiA prenyltransferase family. It depends on Mg(2+) as a cofactor.

It localises to the cell inner membrane. It carries out the reaction all-trans-nonaprenyl diphosphate + 4-hydroxybenzoate = 4-hydroxy-3-(all-trans-nonaprenyl)benzoate + diphosphate. Catalyzes the prenylation of para-hydroxybenzoate (PHB) with an all-trans polyprenyl group. Mediates the second step in the final reaction sequence of plastoquinone-9 (PQ-9) biosynthesis, which is the condensation of the polyisoprenoid side chain with PHB, generating the first membrane-bound Q intermediate 4-hydroxy-3-solanesylbenzoate. In Synechocystis sp. (strain ATCC 27184 / PCC 6803 / Kazusa), this protein is 4-hydroxybenzoate solanesyltransferase.